Reading from the N-terminus, the 356-residue chain is MADFFASSFWTGFLWPLIVMIAQSVLLLVVLLVAIAYILLADRKIWAAVQIRRGPNVVGPWGLFQSFADLLKFVLKEPIIPAGANKGVFLLAPLVSCVLALAAWAVIPTNLGWAIADINVGILFIFAISSLSIYGIIMAGWSSNSKYPFLAALRSAAQMVSYEVSIGFVIITVLLCAGTLNLSAVVEAQHARGLASLIGLPQLTILNWYVWPLFPMFVVFYVSALAETNRPPFDLVEAESELVAGFMVEYGSTPYLLFMLGEYVAITTMCALATILFLGGWLPPIDLPPFNWVPGVIWFALKLFFMFFLIAMAKAIVPRYRYDQLMRLGWKVFLPLSLVMVVIVAGVLHFAGIAPK.

8 helical membrane passes run 18–38 (IVMIAQSVLLLVVLLVAIAYI), 87–107 (GVFLLAPLVSCVLALAAWAVI), 120–140 (VGILFIFAISSLSIYGIIMAG), 166–186 (IGFVIITVLLCAGTLNLSAVV), 205–225 (ILNWYVWPLFPMFVVFYVSAL), 265–285 (AITTMCALATILFLGGWLPPI), 292–312 (WVPGVIWFALKLFFMFFLIAM), and 333–353 (FLPLSLVMVVIVAGVLHFAGI).

The protein belongs to the complex I subunit 1 family. As to quaternary structure, NDH-1 is composed of 14 different subunits. Subunits NuoA, H, J, K, L, M, N constitute the membrane sector of the complex.

Its subcellular location is the cell inner membrane. The enzyme catalyses a quinone + NADH + 5 H(+)(in) = a quinol + NAD(+) + 4 H(+)(out). In terms of biological role, NDH-1 shuttles electrons from NADH, via FMN and iron-sulfur (Fe-S) centers, to quinones in the respiratory chain. The immediate electron acceptor for the enzyme in this species is believed to be ubiquinone. Couples the redox reaction to proton translocation (for every two electrons transferred, four hydrogen ions are translocated across the cytoplasmic membrane), and thus conserves the redox energy in a proton gradient. This subunit may bind ubiquinone. The protein is NADH-quinone oxidoreductase subunit H of Bradyrhizobium sp. (strain BTAi1 / ATCC BAA-1182).